The primary structure comprises 688 residues: Glycine--tRNA ligase beta subunit (688 aa).

This sequence belongs to the class-II aminoacyl-tRNA synthetase family. In terms of assembly, tetramer of two alpha and two beta subunits.

It is found in the cytoplasm. It catalyses the reaction tRNA(Gly) + glycine + ATP = glycyl-tRNA(Gly) + AMP + diphosphate. This Aliivibrio fischeri (strain MJ11) (Vibrio fischeri) protein is Glycine--tRNA ligase beta subunit.